A 309-amino-acid chain; its full sequence is Homoserine O-succinyltransferase (309 aa).

Residue C142 is the Acyl-thioester intermediate of the active site. The substrate site is built by K163 and S192. H235 serves as the catalytic Proton acceptor. E237 is a catalytic residue. R249 is a substrate binding site.

This sequence belongs to the MetA family.

The protein resides in the cytoplasm. The enzyme catalyses L-homoserine + succinyl-CoA = O-succinyl-L-homoserine + CoA. The protein operates within amino-acid biosynthesis; L-methionine biosynthesis via de novo pathway; O-succinyl-L-homoserine from L-homoserine: step 1/1. In terms of biological role, transfers a succinyl group from succinyl-CoA to L-homoserine, forming succinyl-L-homoserine. This is Homoserine O-succinyltransferase from Erwinia tasmaniensis (strain DSM 17950 / CFBP 7177 / CIP 109463 / NCPPB 4357 / Et1/99).